The chain runs to 129 residues: RxLR effector protein SFI6 (129 aa).

The first 16 residues, 1 to 16 (MTLVVLATGLLASGTA), serve as a signal peptide directing secretion. Residues 42-64 (RFLRSHQITDDKVEINEHGEEER) carry the RxLR-dEER motif.

It belongs to the RxLR effector family.

The protein resides in the secreted. Its subcellular location is the host cytoplasm. It is found in the host cell membrane. Effector that suppresses flg22-induced post-translational MAP kinase activation in tomato but not in Arabidopsis. The perception of highly conserved pathogen- or microbe-associated molecular patterns (PAMPs/MAMPs), such as flg22, triggers converging signaling pathways recruiting MAP kinase cascades and inducing transcriptional re-programming, yielding a generic antimicrobial response. This Phytophthora infestans (strain T30-4) (Potato late blight agent) protein is RxLR effector protein SFI6.